We begin with the raw amino-acid sequence, 509 residues long: T-complex protein 11-like protein 1 (509 aa).

Residues 1-12 (MSENLDKSHVDE) show a composition bias toward basic and acidic residues. Residues 1–57 (MSENLDKSHVDEAGEAEAAASEQGLEGALECSDETLQKKVKSDSPSSQRVGRPHSSP) form a disordered region. Residues 16-30 (AEAAASEQGLEGALE) are compositionally biased toward low complexity. S56 carries the post-translational modification Phosphoserine.

It belongs to the TCP11 family.

In Mus musculus (Mouse), this protein is T-complex protein 11-like protein 1 (Tcp11l1).